Consider the following 706-residue polypeptide: DNA ligase (706 aa).

NAD(+)-binding positions include 40–44 (DLQYD), 89–90 (SI), and E120. The active-site N6-AMP-lysine intermediate is the K122. NAD(+)-binding residues include R143, E190, K306, and K330. Zn(2+)-binding residues include C424, C427, C442, and C447. Positions 625-706 (EANLPLAGKN…FRLRYETEAT (82 aa)) constitute a BRCT domain.

The protein belongs to the NAD-dependent DNA ligase family. LigA subfamily. It depends on Mg(2+) as a cofactor. Mn(2+) is required as a cofactor.

The enzyme catalyses NAD(+) + (deoxyribonucleotide)n-3'-hydroxyl + 5'-phospho-(deoxyribonucleotide)m = (deoxyribonucleotide)n+m + AMP + beta-nicotinamide D-nucleotide.. DNA ligase that catalyzes the formation of phosphodiester linkages between 5'-phosphoryl and 3'-hydroxyl groups in double-stranded DNA using NAD as a coenzyme and as the energy source for the reaction. It is essential for DNA replication and repair of damaged DNA. This Rhodopirellula baltica (strain DSM 10527 / NCIMB 13988 / SH1) protein is DNA ligase.